A 329-amino-acid chain; its full sequence is Serpentine receptor class alpha-2 (329 aa).

7 consecutive transmembrane segments (helical) span residues 25–45 (FVYLLAIILTFITTYFAVKIL), 57–77 (ILLVQNLFYANLYQFFHGIEA), 104–124 (YYKIILMGSSGMVYGQTGLLI), 144–164 (CAVISILVLICSSSTGRLIVW), 188–208 (HYFTMCAVLSTINFCISTFIL), 240–260 (FLTVSQFVAVFLNSFGMIVLV), and 273–293 (LLVVWLYAFPIVVLMFPVILV).

It belongs to the nematode receptor-like protein sra family.

It localises to the membrane. In Caenorhabditis elegans, this protein is Serpentine receptor class alpha-2 (sra-2).